Reading from the N-terminus, the 100-residue chain is Integration host factor subunit beta (100 aa).

The interval 81–100 (KPGKELRDRVNEDEHEEAHT) is disordered. The segment covering 82-100 (PGKELRDRVNEDEHEEAHT) has biased composition (basic and acidic residues).

This sequence belongs to the bacterial histone-like protein family. Heterodimer of an alpha and a beta chain.

Its function is as follows. This protein is one of the two subunits of integration host factor, a specific DNA-binding protein that functions in genetic recombination as well as in transcriptional and translational control. The chain is Integration host factor subunit beta (ihfB) from Pseudomonas putida (Arthrobacter siderocapsulatus).